A 310-amino-acid polypeptide reads, in one-letter code: CCR4-NOT transcription complex subunit 7 (310 aa).

4 residues coordinate a divalent metal cation: aspartate 51, glutamate 53, aspartate 172, and aspartate 245.

This sequence belongs to the CAF1 family. As to quaternary structure, component of the CCR4-NOT complex at least composed of ccf-1, ccr-4 and let-711, which is required for germ cell development in hermaphrodites. Within the complex interacts with let-711. As to expression, highly expressed in the germline. In particular, highly expressed in germ cells that enter meiosis and progress through the pachytene stage.

It is found in the nucleus. Its subcellular location is the cytoplasm. It carries out the reaction Exonucleolytic cleavage of poly(A) to 5'-AMP.. In terms of biological role, catalytic component of the CCR4-NOT complex which is one of the major cellular mRNA deadenylases and is linked to various cellular processes including bulk mRNA degradation, miRNA-mediated repression, translational repression during translational initiation and general transcription regulation. Within the complex, plays a role in miRNA-mediated deadenylation in embryos. Within the complex promotes germ cell development and fertility in hermaphrodites. Additional complex functions may be a consequence of its influence on mRNA expression. This Caenorhabditis elegans protein is CCR4-NOT transcription complex subunit 7.